A 1123-amino-acid polypeptide reads, in one-letter code: Leucine--tRNA ligase, cytoplasmic (1123 aa).

The 'HIGH' region signature appears at P84–H94. Residues K757–S761 carry the 'KMSKS' region motif. Residue K760 participates in ATP binding.

Belongs to the class-I aminoacyl-tRNA synthetase family.

The protein resides in the cytoplasm. It catalyses the reaction tRNA(Leu) + L-leucine + ATP = L-leucyl-tRNA(Leu) + AMP + diphosphate. The protein is Leucine--tRNA ligase, cytoplasmic (leu-6) of Neurospora crassa (strain ATCC 24698 / 74-OR23-1A / CBS 708.71 / DSM 1257 / FGSC 987).